Reading from the N-terminus, the 61-residue chain is uncharacterized protein (61 aa).

This is an uncharacterized protein from Escherichia coli (strain K12).